Consider the following 424-residue polypeptide: 3-phosphoshikimate 1-carboxyvinyltransferase (424 aa).

3-phosphoshikimate-binding residues include Lys21, Ser22, and Arg26. Lys21 lines the phosphoenolpyruvate pocket. Phosphoenolpyruvate-binding residues include Gly92 and Arg120. 3-phosphoshikimate contacts are provided by Ser163, Ser164, Gln165, Ser191, Asp306, and Lys333. A phosphoenolpyruvate-binding site is contributed by Gln165. The active-site Proton acceptor is the Asp306. 3 residues coordinate phosphoenolpyruvate: Arg337, Arg379, and Lys405.

This sequence belongs to the EPSP synthase family. As to quaternary structure, monomer.

It is found in the cytoplasm. The enzyme catalyses 3-phosphoshikimate + phosphoenolpyruvate = 5-O-(1-carboxyvinyl)-3-phosphoshikimate + phosphate. Its pathway is metabolic intermediate biosynthesis; chorismate biosynthesis; chorismate from D-erythrose 4-phosphate and phosphoenolpyruvate: step 6/7. Functionally, catalyzes the transfer of the enolpyruvyl moiety of phosphoenolpyruvate (PEP) to the 5-hydroxyl of shikimate-3-phosphate (S3P) to produce enolpyruvyl shikimate-3-phosphate and inorganic phosphate. In Clostridium perfringens (strain ATCC 13124 / DSM 756 / JCM 1290 / NCIMB 6125 / NCTC 8237 / Type A), this protein is 3-phosphoshikimate 1-carboxyvinyltransferase.